The chain runs to 417 residues: MAKEGVEKAEETEQMIEKETSKEPAEGGDGSHRLGDAQEMRAVVLAGFGGLNKLRLSRKAMPEPQDGELKIRVKACGLNFIDLMVRQGNIDNPPKTPLVPGFECSGIVEALGDSVKGYEIGDRVMAFVNYNAWAEVVCTPVEFVYKIPDDMSFSEAAAFPMNFVTAYTMLFEIANLREGMSVLVHSAGGGVGQAVAQLCSTVPNVTVFGTASTFKHEAIKDSVTHLFDRNADYVQEVKRISAEGVDIVLDCLCGDNTGKGLSLLKPLGTYILYGSSNMVTGETKSFFSFAKSWWQVEKVNPIKLYEENKVIAGFSLLNLLFKQGRSGLIRGVVEKLIGLYNQKKIKPVVDSLWALEEVKEAMQRIHDRGNIGKLILDVEKTPTPLMANDSTETSEAGEEEEDHEGDSENKERMPFIQ.

Disordered regions lie at residues 1-33 and 382-417; these read MAKEGVEKAEETEQMIEKETSKEPAEGGDGSHR and PTPLMANDSTETSEAGEEEEDHEGDSENKERMPFIQ. Serine 390 carries the post-translational modification Phosphoserine. Phosphothreonine is present on residues threonine 391 and threonine 393. Serine 394 carries the phosphoserine modification. Over residues 395-405 the composition is skewed to acidic residues; it reads EAGEEEEDHEG. A compositionally biased stretch (basic and acidic residues) spans 406–417; the sequence is DSENKERMPFIQ.

The protein belongs to the zinc-containing alcohol dehydrogenase family. Quinone oxidoreductase subfamily.

The chain is Synaptic vesicle membrane protein VAT-1 homolog-like (Vat1l) from Mus musculus (Mouse).